We begin with the raw amino-acid sequence, 193 residues long: nitroreductase FRM2 (193 aa).

Belongs to the nitroreductase family. The cofactor is FMN.

The protein resides in the cytoplasm. The protein localises to the nucleus. It catalyses the reaction 4-(hydroxyamino)quinoline N-oxide + 2 NAD(+) + H2O = 4-nitroquinoline N-oxide + 2 NADH + 2 H(+). Type II nitroreductase, able to reduce 4-nitroquinoline N-oxide (4-NQO) into 4-aminoquinoline-N-oxide (4-AQO) via 4-hydroxyaminoquinoline (4-HAQO), using NADH as reductant. involved in the oxidative stress response. Plays a possible role in the metal stress response. Involved in negative regulation of fatty acid metabolism. The polypeptide is nitroreductase FRM2 (Saccharomyces cerevisiae (strain ATCC 204508 / S288c) (Baker's yeast)).